A 346-amino-acid polypeptide reads, in one-letter code: Elongation factor Ts (346 aa).

The tract at residues Thr-80–Val-83 is involved in Mg(2+) ion dislocation from EF-Tu.

This sequence belongs to the EF-Ts family.

The protein localises to the cytoplasm. In terms of biological role, associates with the EF-Tu.GDP complex and induces the exchange of GDP to GTP. It remains bound to the aminoacyl-tRNA.EF-Tu.GTP complex up to the GTP hydrolysis stage on the ribosome. The chain is Elongation factor Ts from Streptococcus uberis (strain ATCC BAA-854 / 0140J).